The chain runs to 585 residues: Rhizobactin siderophore biosynthesis protein RhbC (585 aa).

Belongs to the IucA/IucC family.

The protein operates within siderophore biosynthesis; rhizobactin biosynthesis. This Rhizobium meliloti (strain 1021) (Ensifer meliloti) protein is Rhizobactin siderophore biosynthesis protein RhbC (rhbC).